Here is a 157-residue protein sequence, read N- to C-terminus: Protein Smg homolog (157 aa).

It belongs to the Smg family.

The chain is Protein Smg homolog from Photobacterium profundum (strain SS9).